The sequence spans 516 residues: RNA-binding region-containing protein 3 (516 aa).

Disordered stretches follow at residues 1–27 (MAAPEQPLPMSRGCQNSSSLSPPRGDR), 106–130 (VHSPCPSLGTEKKKRSDDPVEDDKE), 210–254 (EDYM…DEDR), and 264–283 (ANLQPKRPKPIKQRHVRKKR). S21 carries the post-translational modification Phosphoserine. One can recognise an RRM 1 domain in the interval 27 to 102 (RTLLVRHLPA…HTLVVEFAKE (76 aa)). At S108 the chain carries Phosphoserine. A compositionally biased stretch (basic and acidic residues) spans 115-130 (TEKKKRSDDPVEDDKE). The segment covering 217 to 230 (APLPPTSPQPPEEP) has biased composition (pro residues). Positions 269–283 (KRPKPIKQRHVRKKR) are enriched in basic residues. The 84-residue stretch at 419 to 502 (CRIYVKNLAK…KPMVVQFARS (84 aa)) folds into the RRM 2 domain.

In terms of assembly, component of the U11/U12 snRNPs that are part of the U12-type spliceosome. Found in a complex with m(7)G-capped U12 snRNA. Interacts with PDCD7.

Its subcellular location is the nucleus. In terms of biological role, participates in pre-mRNA U12-dependent splicing, performed by the minor spliceosome which removes U12-type introns. U12-type introns comprises less than 1% of all non-coding sequences. Binds to the 3'-stem-loop of m(7)G-capped U12 snRNA. This is RNA-binding region-containing protein 3 (RNPC3) from Bos taurus (Bovine).